Consider the following 508-residue polypeptide: POTE ankyrin domain family member G (508 aa).

ANK repeat units follow at residues 172–201 (QKRT…QLNI), 205–234 (KKRT…DPNI), 238–267 (YGNT…DIES), 271–300 (HGLT…NLNA), and 304–333 (YGRT…DVSS). Polar residues predominate over residues 367 to 376 (KVSSENSNPE). Positions 367–488 (KVSSENSNPE…QLSEEQNTGI (122 aa)) are disordered. Composition is skewed to basic and acidic residues over residues 377–392 (QDLK…RLKG) and 406–421 (EINK…EMKK). Residues 476–488 (TQKQLSEEQNTGI) show a composition bias toward polar residues.

This sequence belongs to the POTE family.

This is POTE ankyrin domain family member G (POTEG) from Homo sapiens (Human).